A 300-amino-acid polypeptide reads, in one-letter code: tRNA dimethylallyltransferase (300 aa).

Gly-8–Ser-15 contributes to the ATP binding site. Residue Ser-10–Ser-15 coordinates substrate. An interaction with substrate tRNA region spans residues Asp-33–Ser-36.

It belongs to the IPP transferase family. In terms of assembly, monomer. The cofactor is Mg(2+).

It catalyses the reaction adenosine(37) in tRNA + dimethylallyl diphosphate = N(6)-dimethylallyladenosine(37) in tRNA + diphosphate. Catalyzes the transfer of a dimethylallyl group onto the adenine at position 37 in tRNAs that read codons beginning with uridine, leading to the formation of N6-(dimethylallyl)adenosine (i(6)A). The chain is tRNA dimethylallyltransferase from Wolinella succinogenes (strain ATCC 29543 / DSM 1740 / CCUG 13145 / JCM 31913 / LMG 7466 / NCTC 11488 / FDC 602W) (Vibrio succinogenes).